Reading from the N-terminus, the 125-residue chain is Small ribosomal subunit protein uS13 (125 aa).

Residues 93-125 are disordered; sequence RKGLPVRGQRTKTNARTRKGPKRTVAGKKKAGR.

The protein belongs to the universal ribosomal protein uS13 family. In terms of assembly, part of the 30S ribosomal subunit. Forms a loose heterodimer with protein S19. Forms two bridges to the 50S subunit in the 70S ribosome.

In terms of biological role, located at the top of the head of the 30S subunit, it contacts several helices of the 16S rRNA. In the 70S ribosome it contacts the 23S rRNA (bridge B1a) and protein L5 of the 50S subunit (bridge B1b), connecting the 2 subunits; these bridges are implicated in subunit movement. Contacts the tRNAs in the A and P-sites. The chain is Small ribosomal subunit protein uS13 from Arthrobacter sp. (strain FB24).